The chain runs to 255 residues: Sorbose reductase sou1 (255 aa).

NADP(+) contacts are provided by Ile-21 and Asn-95. Catalysis depends on proton donor residues Ser-148 and Tyr-163. The NADP(+) site is built by Tyr-163, Lys-167, Ile-195, and Thr-197. Lys-167 (lowers pKa of active site Tyr) is an active-site residue.

The protein belongs to the short-chain dehydrogenases/reductases (SDR) family.

It carries out the reaction D-sorbitol + NADP(+) = keto-L-sorbose + NADPH + H(+). Functionally, catalyzes the NADP dependent reduction of L-sorbose to D-glucitol. This chain is Sorbose reductase sou1 (sou1), found in Schizosaccharomyces pombe (strain 972 / ATCC 24843) (Fission yeast).